We begin with the raw amino-acid sequence, 375 residues long: CC-adding tRNA nucleotidyltransferase (375 aa).

A CTP-binding site is contributed by 27–30; it reads GAVR. Positions 40 and 42 each coordinate Mg(2+). CTP is bound by residues 95-96, asparagine 100, 137-146, and arginine 177; these read RD and DPLRMLRAPR.

The protein belongs to the tRNA nucleotidyltransferase/poly(A) polymerase family. The cofactor is Mg(2+).

The enzyme catalyses a tRNA precursor + 2 CTP = a tRNA with a 3' CC end + 2 diphosphate. In terms of biological role, tRNA nucleotidyltransferase involved in the synthesis of the tRNA CCA terminus. Adds the two cytidine residues to tRNA. The sequence is that of CC-adding tRNA nucleotidyltransferase from Halalkalibacterium halodurans (strain ATCC BAA-125 / DSM 18197 / FERM 7344 / JCM 9153 / C-125) (Bacillus halodurans).